We begin with the raw amino-acid sequence, 69 residues long: uncharacterized protein (69 aa).

Disordered regions lie at residues 1–32 (MSAP…GWGD) and 44–69 (QSDA…APSD). 2 stretches are compositionally biased toward basic and acidic residues: residues 7 to 32 (NLDR…GWGD) and 46 to 69 (DADK…APSD).

This is an uncharacterized protein from Schizosaccharomyces pombe (strain 972 / ATCC 24843) (Fission yeast).